Consider the following 348-residue polypeptide: Fe-S cluster assembly protein DRE2 (348 aa).

The segment at 1–158 (MSQYKTGLLL…LPTFKKASSS (158 aa)) is N-terminal SAM-like domain. Residues 137–170 (KTNNTKLQSGSKLPTFKKASSSTSNLPSFKKADH) are disordered. A compositionally biased stretch (polar residues) spans 144 to 163 (QSGSKLPTFKKASSSTSNLP). The interval 159-242 (TSNLPSFKKA…EEELIDEDGS (84 aa)) is linker. Serine 206 carries the phosphoserine modification. 4 residues coordinate [2Fe-2S] cluster: cysteine 252, cysteine 263, cysteine 266, and cysteine 268. A fe-S binding site A region spans residues 252 to 268 (CGKSKTKKKKACKDCTC). Residues cysteine 311, cysteine 314, cysteine 322, and cysteine 325 each contribute to the [4Fe-4S] cluster site. Short sequence motifs (cx2C motif) lie at residues 311 to 314 (CGSC) and 322 to 325 (CSGC). The segment at 311–325 (CGSCSLGDAFRCSGC) is fe-S binding site B.

Belongs to the anamorsin family. Monomer. Interacts with TAH18. Interacts with MIA40. It depends on [2Fe-2S] cluster as a cofactor. [4Fe-4S] cluster is required as a cofactor. In terms of processing, ubiquitinated.

It localises to the cytoplasm. The protein resides in the mitochondrion intermembrane space. Component of the cytosolic iron-sulfur (Fe-S) protein assembly (CIA) machinery required for the maturation of extramitochondrial Fe-S proteins. Part of an electron transfer chain functioning in an early step of cytosolic Fe-S biogenesis, facilitating the de novo assembly of a [4Fe-4S] cluster on the scaffold complex CFD1-NBP35. Electrons are transferred to DRE2 from NADPH via the FAD- and FMN-containing protein TAH18. TAH18-DRE2 are also required for the assembly of the diferric tyrosyl radical cofactor of ribonucleotide reductase (RNR), probably by providing electrons for reduction during radical cofactor maturation in the catalytic small subunit RNR2. Has anti-apoptotic effects in the cell. Involved in negative control of H(2)O(2)-induced cell death. The protein is Fe-S cluster assembly protein DRE2 of Saccharomyces cerevisiae (strain ATCC 204508 / S288c) (Baker's yeast).